A 689-amino-acid polypeptide reads, in one-letter code: Glycine--tRNA ligase beta subunit (689 aa).

The protein belongs to the class-II aminoacyl-tRNA synthetase family. Tetramer of two alpha and two beta subunits.

Its subcellular location is the cytoplasm. It carries out the reaction tRNA(Gly) + glycine + ATP = glycyl-tRNA(Gly) + AMP + diphosphate. The protein is Glycine--tRNA ligase beta subunit of Acinetobacter baumannii (strain ACICU).